The sequence spans 723 residues: Fatty acid oxidation complex subunit alpha (723 aa).

The segment at 1-189 is enoyl-CoA hydratase/isomerase; that stretch reads MIYQAETLQV…KIGLLDAVVD (189 aa). Substrate is bound at residue Asp296. The tract at residues 311-723 is 3-hydroxyacyl-CoA dehydrogenase; that stretch reads NKETQRAAVL…FYGAQQQGSI (413 aa). NAD(+) is bound by residues Met325, Asp344, 401 to 403, Lys408, and Ser430; that span reads VVE. The active-site For 3-hydroxyacyl-CoA dehydrogenase activity is His451. Residue Asn454 participates in NAD(+) binding. The substrate site is built by Asn501 and Tyr661.

It in the N-terminal section; belongs to the enoyl-CoA hydratase/isomerase family. In the C-terminal section; belongs to the 3-hydroxyacyl-CoA dehydrogenase family. Heterotetramer of two alpha chains (FadB) and two beta chains (FadA).

The catalysed reaction is a (3S)-3-hydroxyacyl-CoA + NAD(+) = a 3-oxoacyl-CoA + NADH + H(+). It catalyses the reaction a (3S)-3-hydroxyacyl-CoA = a (2E)-enoyl-CoA + H2O. It carries out the reaction a 4-saturated-(3S)-3-hydroxyacyl-CoA = a (3E)-enoyl-CoA + H2O. The enzyme catalyses (3S)-3-hydroxybutanoyl-CoA = (3R)-3-hydroxybutanoyl-CoA. The catalysed reaction is a (3Z)-enoyl-CoA = a 4-saturated (2E)-enoyl-CoA. It catalyses the reaction a (3E)-enoyl-CoA = a 4-saturated (2E)-enoyl-CoA. It functions in the pathway lipid metabolism; fatty acid beta-oxidation. Involved in the aerobic and anaerobic degradation of long-chain fatty acids via beta-oxidation cycle. Catalyzes the formation of 3-oxoacyl-CoA from enoyl-CoA via L-3-hydroxyacyl-CoA. It can also use D-3-hydroxyacyl-CoA and cis-3-enoyl-CoA as substrate. This Vibrio vulnificus (strain CMCP6) protein is Fatty acid oxidation complex subunit alpha.